The primary structure comprises 135 residues: Large ribosomal subunit protein bL17 (135 aa).

It belongs to the bacterial ribosomal protein bL17 family. Part of the 50S ribosomal subunit. Contacts protein L32.

This Rhodopseudomonas palustris (strain BisB18) protein is Large ribosomal subunit protein bL17.